The following is a 473-amino-acid chain: Putative F-box/LRR-repeat protein At3g59170 (473 aa).

The F-box domain occupies 6-54 (KDMINVLPDALLCHILSFLTTKEAASTSLLSRRWRYLLAFVPNLEFDDS). LRR repeat units follow at residues 168 to 194 (TIKI…YLQS), 196 to 221 (MFDE…VLDG), 229 to 254 (SFTV…GYMH), 333 to 364 (VLYL…TIKS), and 365 to 390 (DPNV…VFQG).

The polypeptide is Putative F-box/LRR-repeat protein At3g59170 (Arabidopsis thaliana (Mouse-ear cress)).